A 133-amino-acid chain; its full sequence is Nickel-responsive regulator (133 aa).

The Ni(2+) site is built by H76, H87, H89, and C95.

Belongs to the transcriptional regulatory CopG/NikR family. Homotetramer. Ni(2+) is required as a cofactor.

In terms of biological role, transcriptional repressor of the nikABCDE operon. Is active in the presence of excessive concentrations of intracellular nickel. This is Nickel-responsive regulator from Escherichia fergusonii (strain ATCC 35469 / DSM 13698 / CCUG 18766 / IAM 14443 / JCM 21226 / LMG 7866 / NBRC 102419 / NCTC 12128 / CDC 0568-73).